Consider the following 178-residue polypeptide: Cytochrome b6-f complex iron-sulfur subunit 1 (178 aa).

The chain crosses the membrane as a helical span at residues 17 to 36; sequence LLNFLAGTTVAVTASAGAYA. The Rieske domain maps to 61 to 161; it reads GNPIPASQIL…VAVVDDQIFI (101 aa). [2Fe-2S] cluster contacts are provided by Cys107, His109, Cys125, and His128. Cysteines 112 and 127 form a disulfide.

Belongs to the Rieske iron-sulfur protein family. As to quaternary structure, the 4 large subunits of the cytochrome b6-f complex are cytochrome b6, subunit IV (17 kDa polypeptide, PetD), cytochrome f and the Rieske protein, while the 4 small subunits are PetG, PetL, PetM and PetN. The complex functions as a dimer. Requires [2Fe-2S] cluster as cofactor.

The protein localises to the cellular thylakoid membrane. It carries out the reaction 2 oxidized [plastocyanin] + a plastoquinol + 2 H(+)(in) = 2 reduced [plastocyanin] + a plastoquinone + 4 H(+)(out). In terms of biological role, component of the cytochrome b6-f complex, which mediates electron transfer between photosystem II (PSII) and photosystem I (PSI), cyclic electron flow around PSI, and state transitions. The sequence is that of Cytochrome b6-f complex iron-sulfur subunit 1 from Synechocystis sp. (strain ATCC 27184 / PCC 6803 / Kazusa).